A 285-amino-acid chain; its full sequence is Pantothenate synthetase (285 aa).

30 to 37 (MGNLHDGH) serves as a coordination point for ATP. The Proton donor role is filled by His-37. Gln-61 serves as a coordination point for (R)-pantoate. Gln-61 contributes to the beta-alanine binding site. Residue 149–152 (GEKD) participates in ATP binding. Position 155 (Gln-155) interacts with (R)-pantoate. ATP contacts are provided by residues Ile-178 and 186–189 (FSSR).

Belongs to the pantothenate synthetase family. In terms of assembly, homodimer.

It localises to the cytoplasm. It catalyses the reaction (R)-pantoate + beta-alanine + ATP = (R)-pantothenate + AMP + diphosphate + H(+). It functions in the pathway cofactor biosynthesis; (R)-pantothenate biosynthesis; (R)-pantothenate from (R)-pantoate and beta-alanine: step 1/1. In terms of biological role, catalyzes the condensation of pantoate with beta-alanine in an ATP-dependent reaction via a pantoyl-adenylate intermediate. The sequence is that of Pantothenate synthetase from Buchnera aphidicola subsp. Schizaphis graminum (strain Sg).